The primary structure comprises 218 residues: 25 kDa calcium-binding protein (218 aa).

EF-hand domains are found at residues 24-59 (GAKT…AYKS), 66-101 (PSSD…YLTG), 128-163 (AKLD…TYAE), and 171-206 (PTKE…SLQK). 17 residues coordinate Ca(2+): aspartate 37, arginine 43, aspartate 48, aspartate 79, asparagine 81, aspartate 83, aspartate 90, aspartate 141, aspartate 143, serine 145, glutamine 147, glutamate 152, aspartate 184, asparagine 186, aspartate 188, serine 190, and glutamate 195.

Expected to play a crucial role in calcium-dependent regulation of ciliary movement. The chain is 25 kDa calcium-binding protein from Tetrahymena thermophila.